Here is a 131-residue protein sequence, read N- to C-terminus: Fumarate reductase subunit C (131 aa).

3 helical membrane-spanning segments follow: residues 30-50 (EGTA…LFAL), 61-81 (IGFL…AAAL), and 110-130 (IKGL…VALF).

This sequence belongs to the FrdC family. As to quaternary structure, part of an enzyme complex containing four subunits: a flavoprotein (FrdA), an iron-sulfur protein (FrdB), and two hydrophobic anchor proteins (FrdC and FrdD).

It localises to the cell inner membrane. Two distinct, membrane-bound, FAD-containing enzymes are responsible for the catalysis of fumarate and succinate interconversion; fumarate reductase is used in anaerobic growth, and succinate dehydrogenase is used in aerobic growth. Anchors the catalytic components of the fumarate reductase complex to the cell inner membrane, binds quinones. The chain is Fumarate reductase subunit C from Klebsiella pneumoniae subsp. pneumoniae (strain ATCC 700721 / MGH 78578).